Here is a 393-residue protein sequence, read N- to C-terminus: Protein FAM47E (393 aa).

Residues 326–354 adopt a coiled-coil conformation; the sequence is VSHKAQEENFKKELQEQEELLADLHGTVA.

This sequence belongs to the FAM47 family. As to quaternary structure, interacts with PRMT5; the interaction is direct. Interacts with WDR77.

The protein resides in the nucleus. It is found in the chromosome. It localises to the cytoplasm. Promotes histone methylation by localizing the arginine methyltransferase PRMT5 to chromatin. In Homo sapiens (Human), this protein is Protein FAM47E (FAM47E).